Here is a 606-residue protein sequence, read N- to C-terminus: Alpha-1,2-mannosyltransferase MNN23 (606 aa).

Over 1 to 14 the chain is Cytoplasmic; the sequence is MSINFLSIPRNRFK. The chain crosses the membrane as a helical span at residues 15–35; sequence AIGVLSVTCILIYVILHSSII. The Extracellular portion of the chain corresponds to 36–606; the sequence is TTDFDVSDYG…QVAWLSKSQN (571 aa). The interval 59-86 is disordered; that stretch reads DNGENLKDPQPELDNDKGNGETDTTTSN. Residues 62-78 show a composition bias toward basic and acidic residues; that stretch reads ENLKDPQPELDNDKGNG.

Belongs to the MNN1/MNT family.

It is found in the golgi apparatus membrane. It functions in the pathway protein modification; protein glycosylation. In terms of biological role, alpha-1,2-mannosyltransferase required for cell wall integrity. Responsible for addition of the first alpha-1,2-linked mannose to form the branches on the mannan backbone of oligosaccharides. Addition of alpha-1,2-mannose is required for stabilization of the alpha-1,6-mannose backbone and hence regulates mannan fibril length; and is important for both immune recognition and virulence. This chain is Alpha-1,2-mannosyltransferase MNN23 (MNN23), found in Candida albicans (strain SC5314 / ATCC MYA-2876) (Yeast).